Consider the following 415-residue polypeptide: MRIISWDVGVIYLAYCVLEYVLSKNKEVIINIIDWNIINLMENNRLVINCCGMKKGNTICDKKASYCLRTPDKKLFGYCKTHLTQYNINWSIQDTEKMFTKISKPDNTCTFLKKTGDFCGKKATYKYKNNKSTNYYCNVHYKSELKNRTKEFSPQPIKNTIVKKYPTAQLQYNLIKKLDKLSKHFAMLGIERVVIENQPSQKNPKMKSIASTLFDYFLIRGFCDKIHNIDIKLVRYMCPSNKLKVNKDNTLEVFKANKDSKKKYKLTKALGIQYTKQLLNNEQEQLDYLSLFEKKDDLCDAYLQGRYYLEFIMDKTDKNYPIIKCQENKFNKPNNDDLQNESGDDSETESSLSWENIKIEISDDQADYYAKKYNKSVMNKSNKLMMNKSMMNKSESNKKSNRKSNKRSNKNIITL.

2 disordered regions span residues 329-351 (KFNK…TESS) and 388-415 (KSMM…IITL). Residues 338-348 (LQNESGDDSET) show a composition bias toward acidic residues. Residues 399–409 (KSNRKSNKRSN) are compositionally biased toward basic residues.

This is an uncharacterized protein from Acanthamoeba polyphaga mimivirus (APMV).